The sequence spans 292 residues: Ribosomal protein L11 methyltransferase (292 aa).

S-adenosyl-L-methionine contacts are provided by Thr-144, Gly-165, Asp-187, and Asn-229.

This sequence belongs to the methyltransferase superfamily. PrmA family.

The protein localises to the cytoplasm. The catalysed reaction is L-lysyl-[protein] + 3 S-adenosyl-L-methionine = N(6),N(6),N(6)-trimethyl-L-lysyl-[protein] + 3 S-adenosyl-L-homocysteine + 3 H(+). Its function is as follows. Methylates ribosomal protein L11. The sequence is that of Ribosomal protein L11 methyltransferase from Pseudomonas savastanoi pv. phaseolicola (strain 1448A / Race 6) (Pseudomonas syringae pv. phaseolicola (strain 1448A / Race 6)).